A 252-amino-acid polypeptide reads, in one-letter code: Small ribosomal subunit protein uS3 (252 aa).

Positions 16–85 (IDEYLETKLE…NPQVEVKEVD (70 aa)) constitute a KH type-2 domain. The segment at 233–252 (EESEIEEITEEIEDVETLEE) is disordered.

The protein belongs to the universal ribosomal protein uS3 family. Part of the 30S ribosomal subunit.

Functionally, binds the lower part of the 30S subunit head. This chain is Small ribosomal subunit protein uS3, found in Methanosphaera stadtmanae (strain ATCC 43021 / DSM 3091 / JCM 11832 / MCB-3).